We begin with the raw amino-acid sequence, 424 residues long: Histidine--tRNA ligase (424 aa).

The protein belongs to the class-II aminoacyl-tRNA synthetase family. In terms of assembly, homodimer.

It is found in the cytoplasm. It carries out the reaction tRNA(His) + L-histidine + ATP = L-histidyl-tRNA(His) + AMP + diphosphate + H(+). The sequence is that of Histidine--tRNA ligase from Escherichia coli O17:K52:H18 (strain UMN026 / ExPEC).